The sequence spans 343 residues: Tetraacyldisaccharide 4'-kinase (343 aa).

Residue 65 to 72 (HAGGTGKT) participates in ATP binding.

The protein belongs to the LpxK family.

The enzyme catalyses a lipid A disaccharide + ATP = a lipid IVA + ADP + H(+). It participates in glycolipid biosynthesis; lipid IV(A) biosynthesis; lipid IV(A) from (3R)-3-hydroxytetradecanoyl-[acyl-carrier-protein] and UDP-N-acetyl-alpha-D-glucosamine: step 6/6. In terms of biological role, transfers the gamma-phosphate of ATP to the 4'-position of a tetraacyldisaccharide 1-phosphate intermediate (termed DS-1-P) to form tetraacyldisaccharide 1,4'-bis-phosphate (lipid IVA). This is Tetraacyldisaccharide 4'-kinase from Neisseria gonorrhoeae (strain ATCC 700825 / FA 1090).